The primary structure comprises 372 residues: Solute carrier family 35 member F6 (372 aa).

The signal sequence occupies residues 1 to 18; sequence MAWTKYQLFLAGLMLVTG. 2 helical membrane-spanning segments follow: residues 48-68 and 89-109; these read FVQAVGMFLGEFSCLAAFYLL and LLFLPPALCDMTGTSIMYVAL. In terms of domain architecture, EamA spans 105 to 160; the sequence is MYVALNMTSASSFQMLRGAVIIFTGLFSVAFLDRRLVPSQWLGILITIAGLVVVGL. N-linked (GlcNAc...) asparagine glycosylation occurs at Asn110. 7 consecutive transmembrane segments (helical) span residues 116 to 136, 145 to 165, 176 to 196, 211 to 231, 261 to 281, 293 to 312, and 320 to 336; these read SFQMLRGAVIIFTGLFSVAFL, WLGILITIAGLVVVGLADLLS, VITGDLLIIMAQIIIAIQMVL, AVGIEGFFGFVILSLLLVPMY, LIALALLGNISSIAFFNFSGI, MVLDTLRTVVIWAFTLALGW, and ILGFLILLMGTALYNGL. Thr366 is modified (phosphothreonine).

This sequence belongs to the SLC35F solute transporter family. In terms of assembly, interacts with SLC25A5.

Its subcellular location is the mitochondrion. The protein localises to the lysosome membrane. Involved in the maintenance of mitochondrial membrane potential in pancreatic ductal adenocarcinoma (PDAC) cells. Promotes pancreatic ductal adenocarcinoma (PDAC) cell growth. May play a role as a nucleotide-sugar transporter. The protein is Solute carrier family 35 member F6 (Slc35f6) of Rattus norvegicus (Rat).